A 552-amino-acid chain; its full sequence is Threonylcarbamoyladenosine tRNA methylthiotransferase (552 aa).

Positions 31-61 are disordered; the sequence is YENKKTVTVRAKKRSQIRLESQEEEEKPKPT. The 108-residue stretch at 71-178 folds into the MTTase N-terminal domain; that stretch reads QKVFVKTWGC…VVEVVEETLK (108 aa). [4Fe-4S] cluster-binding residues include Cys-80, Cys-115, Cys-144, Cys-221, Cys-225, and Cys-228. Residues 207–438 enclose the Radical SAM core domain; that stretch reads RKNPLIEIIS…DLFYSYEPYA (232 aa). The TRAM domain occupies 438–500; the sequence is ADRVGEIYTV…KFSMVGEILD (63 aa). The chain crosses the membrane as a helical span at residues 532 to 552; the sequence is FGIALVLGSLAFLIQLVVRLL.

The protein belongs to the methylthiotransferase family. CDKAL1 subfamily. [4Fe-4S] cluster serves as cofactor.

The protein localises to the membrane. It catalyses the reaction N(6)-L-threonylcarbamoyladenosine(37) in tRNA + (sulfur carrier)-SH + AH2 + 2 S-adenosyl-L-methionine = 2-methylsulfanyl-N(6)-L-threonylcarbamoyladenosine(37) in tRNA + (sulfur carrier)-H + 5'-deoxyadenosine + L-methionine + A + S-adenosyl-L-homocysteine + 2 H(+). Functionally, catalyzes the methylthiolation of N6-threonylcarbamoyladenosine (t(6)A), leading to the formation of 2-methylthio-N6-threonylcarbamoyladenosine (ms(2)t(6)A) at position 37 in tRNAs that read codons beginning with adenine. The protein is Threonylcarbamoyladenosine tRNA methylthiotransferase of Drosophila melanogaster (Fruit fly).